The chain runs to 615 residues: DNA mismatch repair protein MutL (615 aa).

Residues 362 to 397 (HFAEPAVREPVAPRYSPAPASGSRPAASWPNAQPGY) are disordered. Low complexity predominate over residues 373–391 (APRYSPAPASGSRPAASWP).

The protein belongs to the DNA mismatch repair MutL/HexB family.

In terms of biological role, this protein is involved in the repair of mismatches in DNA. It is required for dam-dependent methyl-directed DNA mismatch repair. May act as a 'molecular matchmaker', a protein that promotes the formation of a stable complex between two or more DNA-binding proteins in an ATP-dependent manner without itself being part of a final effector complex. The protein is DNA mismatch repair protein MutL of Escherichia coli O45:K1 (strain S88 / ExPEC).